A 361-amino-acid polypeptide reads, in one-letter code: Ribosomal RNA large subunit methyltransferase M (361 aa).

S-adenosyl-L-methionine-binding positions include S187, 220-223, D239, D259, and D276; that span reads CPGG. K305 serves as the catalytic Proton acceptor.

The protein belongs to the class I-like SAM-binding methyltransferase superfamily. RNA methyltransferase RlmE family. RlmM subfamily. Monomer.

It is found in the cytoplasm. It carries out the reaction cytidine(2498) in 23S rRNA + S-adenosyl-L-methionine = 2'-O-methylcytidine(2498) in 23S rRNA + S-adenosyl-L-homocysteine + H(+). Catalyzes the 2'-O-methylation at nucleotide C2498 in 23S rRNA. The protein is Ribosomal RNA large subunit methyltransferase M of Shewanella sp. (strain W3-18-1).